The sequence spans 511 residues: 2-isopropylmalate synthase (511 aa).

Positions 6 to 269 constitute a Pyruvate carboxyltransferase domain; it reads IIIFDTTLRD…YTDIKCENIF (264 aa). Mn(2+) is bound by residues D15, H203, H205, and N239. The segment at 394-511 is regulatory domain; that stretch reads VIEKLSVISG…SLKVEERKMA (118 aa).

Belongs to the alpha-IPM synthase/homocitrate synthase family. LeuA type 1 subfamily. Homodimer. Requires Mn(2+) as cofactor.

The protein localises to the cytoplasm. The enzyme catalyses 3-methyl-2-oxobutanoate + acetyl-CoA + H2O = (2S)-2-isopropylmalate + CoA + H(+). It participates in amino-acid biosynthesis; L-leucine biosynthesis; L-leucine from 3-methyl-2-oxobutanoate: step 1/4. Catalyzes the condensation of the acetyl group of acetyl-CoA with 3-methyl-2-oxobutanoate (2-ketoisovalerate) to form 3-carboxy-3-hydroxy-4-methylpentanoate (2-isopropylmalate). This Campylobacter jejuni subsp. jejuni serotype O:23/36 (strain 81-176) protein is 2-isopropylmalate synthase.